Here is a 137-residue protein sequence, read N- to C-terminus: Ubiquitin-conjugating enzyme variant MMS2 (137 aa).

Residues 5–137 enclose the UBC core domain; it reads PRNFRLLEEL…LRQPKEGETF (133 aa). At Ser71 the chain carries Phosphoserine.

The protein belongs to the ubiquitin-conjugating enzyme family. In terms of assembly, heterodimer with UBC13.

In terms of biological role, has a role in the DNA error-free postreplication repair (PRR) pathway. Lacks catalytic activity by itself. The UBC13/MMS2 heterodimer catalyzes the synthesis of non-canonical poly-ubiquitin chains that are linked through 'Lys-63'. This chain is Ubiquitin-conjugating enzyme variant MMS2 (MMS2), found in Saccharomyces cerevisiae (strain ATCC 204508 / S288c) (Baker's yeast).